The primary structure comprises 1333 residues: Inner capsid protein VP1 (1333 aa).

Over residues Met-1 to Lys-10 the composition is skewed to low complexity. Residues Met-1–Thr-71 are disordered. Over residues Arg-11–Glu-21 the composition is skewed to basic and acidic residues. Positions Ile-22–Asp-42 are enriched in polar residues.

It belongs to the turreted BTV-fold inner capsid family. Homodecamer; each decamer is made up of two conformers of VP2, called VP2A and VP2B. 12 homodecamers assemble to form an icosahedral capsid.

Its subcellular location is the virion. In terms of biological role, inner capsid protein that self-assembles to form an icosahedral capsid with a T=2 symmetry, which consists of 120 copies of VP2, with channels at each of its five-fold vertices. This capsid constitutes the innermost concentric layer of the viral mature particle. The protein is Inner capsid protein VP1 of Bombyx mori (Silk moth).